The primary structure comprises 444 residues: Probable D-serine dehydratase (444 aa).

Residue K110 is modified to N6-(pyridoxal phosphate)lysine.

This sequence belongs to the serine/threonine dehydratase family. DsdA subfamily. Pyridoxal 5'-phosphate is required as a cofactor.

It catalyses the reaction D-serine = pyruvate + NH4(+). In Burkholderia thailandensis (strain ATCC 700388 / DSM 13276 / CCUG 48851 / CIP 106301 / E264), this protein is Probable D-serine dehydratase.